We begin with the raw amino-acid sequence, 227 residues long: Ribonuclease 3 (227 aa).

Positions 4-133 constitute an RNase III domain; it reads FETLEKLLSY…LIAAIYLDSN (130 aa). A Mg(2+)-binding site is contributed by Glu46. Residue Asp50 is part of the active site. Mg(2+)-binding residues include Asn119 and Glu122. Glu122 is an active-site residue. One can recognise a DRBM domain in the interval 158-226; that stretch reads DPKTALQEWA…ARSLLHRLKN (69 aa).

This sequence belongs to the ribonuclease III family. As to quaternary structure, homodimer. Mg(2+) serves as cofactor.

Its subcellular location is the cytoplasm. The catalysed reaction is Endonucleolytic cleavage to 5'-phosphomonoester.. Functionally, digests double-stranded RNA. Involved in the processing of primary rRNA transcript to yield the immediate precursors to the large and small rRNAs (23S and 16S). Processes some mRNAs, and tRNAs when they are encoded in the rRNA operon. Processes pre-crRNA and tracrRNA of type II CRISPR loci if present in the organism. The polypeptide is Ribonuclease 3 (Rickettsia massiliae (strain Mtu5)).